A 563-amino-acid chain; its full sequence is Putative cysteine ligase BshC (563 aa).

Positions 493–518 form a coiled coil; the sequence is KEKTYRAGRRKHDELLQQLDKAELNL.

The protein belongs to the BshC family.

In Chlorobaculum tepidum (strain ATCC 49652 / DSM 12025 / NBRC 103806 / TLS) (Chlorobium tepidum), this protein is Putative cysteine ligase BshC.